The sequence spans 81 residues: MSHAVKIYDTCIGCTQCVRACPLDVLEMVPWDGCKAGQIASSPRTEDCVGCKRCETACPTDFLSIRVYLGDETSRSMGLSY.

2 consecutive 4Fe-4S ferredoxin-type domains span residues 2–31 (SHAVKIYDTCIGCTQCVRACPLDVLEMVPW) and 37–68 (GQIASSPRTEDCVGCKRCETACPTDFLSIRVY). Cysteine 11, cysteine 14, cysteine 17, cysteine 21, cysteine 48, cysteine 51, cysteine 54, and cysteine 58 together coordinate [4Fe-4S] cluster.

In terms of assembly, the cyanobacterial PSI reaction center is composed of one copy each of PsaA,B,C,D,E,F,I,J,K,L,M and X, and forms trimeric complexes. [4Fe-4S] cluster serves as cofactor.

Its subcellular location is the cellular thylakoid membrane. It carries out the reaction reduced [plastocyanin] + hnu + oxidized [2Fe-2S]-[ferredoxin] = oxidized [plastocyanin] + reduced [2Fe-2S]-[ferredoxin]. In terms of biological role, apoprotein for the two 4Fe-4S centers FA and FB of photosystem I (PSI); essential for photochemical activity. FB is the terminal electron acceptor of PSI, donating electrons to ferredoxin. The C-terminus interacts with PsaA/B/D and helps assemble the protein into the PSI complex. Required for binding of PsaD and PsaE to PSI. PSI is a plastocyanin/cytochrome c6-ferredoxin oxidoreductase, converting photonic excitation into a charge separation, which transfers an electron from the donor P700 chlorophyll pair to the spectroscopically characterized acceptors A0, A1, FX, FA and FB in turn. This chain is Photosystem I iron-sulfur center, found in Synechococcus sp. (strain WH7803).